The primary structure comprises 846 residues: DNA mismatch repair protein MutS (846 aa).

ATP is bound at residue 594-601 (GPNMSGKS).

It belongs to the DNA mismatch repair MutS family.

This protein is involved in the repair of mismatches in DNA. It is possible that it carries out the mismatch recognition step. This protein has a weak ATPase activity. The chain is DNA mismatch repair protein MutS from Macrococcus caseolyticus (strain JCSC5402) (Macrococcoides caseolyticum).